The sequence spans 157 residues: SsrA-binding protein (157 aa).

The tract at residues 133–157 (LHDKRETEKKRDWSREKSRLLRARG) is disordered. Over residues 135–151 (DKRETEKKRDWSREKSR) the composition is skewed to basic and acidic residues.

The protein belongs to the SmpB family.

The protein resides in the cytoplasm. Functionally, required for rescue of stalled ribosomes mediated by trans-translation. Binds to transfer-messenger RNA (tmRNA), required for stable association of tmRNA with ribosomes. tmRNA and SmpB together mimic tRNA shape, replacing the anticodon stem-loop with SmpB. tmRNA is encoded by the ssrA gene; the 2 termini fold to resemble tRNA(Ala) and it encodes a 'tag peptide', a short internal open reading frame. During trans-translation Ala-aminoacylated tmRNA acts like a tRNA, entering the A-site of stalled ribosomes, displacing the stalled mRNA. The ribosome then switches to translate the ORF on the tmRNA; the nascent peptide is terminated with the 'tag peptide' encoded by the tmRNA and targeted for degradation. The ribosome is freed to recommence translation, which seems to be the essential function of trans-translation. The sequence is that of SsrA-binding protein from Afipia carboxidovorans (strain ATCC 49405 / DSM 1227 / KCTC 32145 / OM5) (Oligotropha carboxidovorans).